The sequence spans 1072 residues: Carbamoyl phosphate synthase large chain (1072 aa).

Residues 1 to 401 (MPKRLDINTI…SLLKAVRSLE (401 aa)) form a carboxyphosphate synthetic domain region. ATP contacts are provided by R129, R169, G175, G176, K208, I210, E215, G241, V242, H243, Q284, and E298. The region spanning 133–327 (RTLMQELNEP…IAKLAAKIAV (195 aa)) is the ATP-grasp 1 domain. Mg(2+)-binding residues include Q284, E298, and N300. 3 residues coordinate Mn(2+): Q284, E298, and N300. The tract at residues 402 to 546 (LGIYHLELDH…YSTYADENES (145 aa)) is oligomerization domain. The carbamoyl phosphate synthetic domain stretch occupies residues 547–929 (IVTDRKSVVV…ALYKGLVASG (383 aa)). The 191-residue stretch at 671–861 (EAALTKLGIP…MANVATKVIL (191 aa)) folds into the ATP-grasp 2 domain. Residues R707, R746, E752, G777, V778, H779, S780, Q820, and E832 each coordinate ATP. Residues Q820, E832, and N834 each coordinate Mg(2+). The Mn(2+) site is built by Q820, E832, and N834. Positions 930–1072 (INIPTHGSVI…QTKRHEVVHA (143 aa)) constitute an MGS-like domain. The tract at residues 930–1072 (INIPTHGSVI…QTKRHEVVHA (143 aa)) is allosteric domain.

It belongs to the CarB family. Composed of two chains; the small (or glutamine) chain promotes the hydrolysis of glutamine to ammonia, which is used by the large (or ammonia) chain to synthesize carbamoyl phosphate. Tetramer of heterodimers (alpha,beta)4. Requires Mg(2+) as cofactor. Mn(2+) is required as a cofactor.

It carries out the reaction hydrogencarbonate + L-glutamine + 2 ATP + H2O = carbamoyl phosphate + L-glutamate + 2 ADP + phosphate + 2 H(+). The enzyme catalyses hydrogencarbonate + NH4(+) + 2 ATP = carbamoyl phosphate + 2 ADP + phosphate + 2 H(+). Its pathway is amino-acid biosynthesis; L-arginine biosynthesis; carbamoyl phosphate from bicarbonate: step 1/1. It participates in pyrimidine metabolism; UMP biosynthesis via de novo pathway; (S)-dihydroorotate from bicarbonate: step 1/3. Its function is as follows. Large subunit of the glutamine-dependent carbamoyl phosphate synthetase (CPSase). CPSase catalyzes the formation of carbamoyl phosphate from the ammonia moiety of glutamine, carbonate, and phosphate donated by ATP, constituting the first step of 2 biosynthetic pathways, one leading to arginine and/or urea and the other to pyrimidine nucleotides. The large subunit (synthetase) binds the substrates ammonia (free or transferred from glutamine from the small subunit), hydrogencarbonate and ATP and carries out an ATP-coupled ligase reaction, activating hydrogencarbonate by forming carboxy phosphate which reacts with ammonia to form carbamoyl phosphate. This Bacillus cereus (strain AH820) protein is Carbamoyl phosphate synthase large chain.